The chain runs to 60 residues: Cytotoxin 4 (60 aa).

4 disulfides stabilise this stretch: C3–C21, C14–C38, C42–C53, and C54–C59.

The protein belongs to the three-finger toxin family. Short-chain subfamily. Type IA cytotoxin sub-subfamily. In terms of assembly, monomer in solution; Homodimer and oligomer in the presence of negatively charged lipids forming a pore with a size ranging between 20 and 30 Angstroms. As to expression, expressed by the venom gland.

It is found in the secreted. The protein localises to the target cell membrane. Shows cytolytic activity on many different cells by forming pore in lipid membranes. In vivo, increases heart rate or kills the animal by cardiac arrest. In addition, it binds to heparin with high affinity, interacts with Kv channel-interacting protein 1 (KCNIP1) in a calcium-independent manner, and binds to integrin alpha-V/beta-3 (ITGAV/ITGB3) with moderate affinity. The chain is Cytotoxin 4 from Naja mossambica (Mozambique spitting cobra).